Consider the following 263-residue polypeptide: 3'-5' ssDNA/RNA exonuclease TatD (263 aa).

Positions 91, 127, and 152 each coordinate a divalent metal cation.

The protein belongs to the metallo-dependent hydrolases superfamily. TatD-type hydrolase family. TatD subfamily. In terms of assembly, monomer. Requires Mg(2+) as cofactor.

Its subcellular location is the cytoplasm. 3'-5' exonuclease that prefers single-stranded DNA and RNA. May play a role in the H(2)O(2)-induced DNA damage repair. The polypeptide is 3'-5' ssDNA/RNA exonuclease TatD (Cronobacter turicensis (strain DSM 18703 / CCUG 55852 / LMG 23827 / z3032)).